Here is a 221-residue protein sequence, read N- to C-terminus: tRNA (guanine-N(7)-)-methyltransferase (221 aa).

The S-adenosyl-L-methionine site is built by Glu43, Glu68, and Asp123. Residue Asp123 is part of the active site. Substrate contacts are provided by residues Lys127, Asp159, and Thr199–Glu202.

It belongs to the class I-like SAM-binding methyltransferase superfamily. TrmB family.

The enzyme catalyses guanosine(46) in tRNA + S-adenosyl-L-methionine = N(7)-methylguanosine(46) in tRNA + S-adenosyl-L-homocysteine. It participates in tRNA modification; N(7)-methylguanine-tRNA biosynthesis. In terms of biological role, catalyzes the formation of N(7)-methylguanine at position 46 (m7G46) in tRNA. This is tRNA (guanine-N(7)-)-methyltransferase from Mycoplasma mycoides subsp. mycoides SC (strain CCUG 32753 / NCTC 10114 / PG1).